A 422-amino-acid chain; its full sequence is MILVKDAIINGKKQDLLVEGNIIKKIGNVPISEVSKDETEIIDGKNCILIPGLVNTHTHIPMSLFRGVADDIPLMEWLSGHIWPMESKLNEKIVYAGTLLGAVEMIKSGTTAFNDMYFFLDSIIKAVDETGIRSTIAYGMIDLFNEEKREKELKSAKKSIEMIKKLNNSRITGALGPHAPYTCSKELLESTNALAREYNVPIHIHMNETVDEINQVLEKTKMRPFEYLNSFGFFDNVTTVCAHCVHLNDSEIKIIKEKNIFVAHNPISNLKLASGVSPVAKLLENEVNITLGTDGCGSNNSLNLFEEMKTAALIHKGVNLNPVLVTAKEAFEFGTLNGAKALNINSGEIKEGKLADFALINVKKPYLTPRENIESHLVYSFNGAVDSVVIDGKLTLKDGKMVTIDEEKVYELAEEAYLELTK.

Positions 57 and 59 each coordinate Zn(2+). Glutamate 86 and histidine 178 together coordinate substrate. Histidine 205 contacts Zn(2+). 2 residues coordinate substrate: glutamate 208 and aspartate 294. Aspartate 294 serves as a coordination point for Zn(2+).

It belongs to the metallo-dependent hydrolases superfamily. MTA/SAH deaminase family. Homotetramer. It depends on Zn(2+) as a cofactor.

The enzyme catalyses 5'-deoxyadenosine + H2O + H(+) = 5'-deoxyinosine + NH4(+). It catalyses the reaction S-adenosyl-L-homocysteine + H2O + H(+) = S-inosyl-L-homocysteine + NH4(+). It carries out the reaction S-methyl-5'-thioadenosine + H2O + H(+) = S-methyl-5'-thioinosine + NH4(+). The catalysed reaction is adenosine + H2O + H(+) = inosine + NH4(+). It participates in amino-acid biosynthesis; S-adenosyl-L-methionine biosynthesis. In terms of biological role, catalyzes the deamination of three SAM-derived enzymatic products, namely 5'-deoxyadenosine, S-adenosyl-L-homocysteine, and 5'-methylthioadenosine, to produce the inosine analogs. Can also deaminate adenosine. The preferred substrate for this enzyme is 5'-deoxyadenosine, but all these substrates are efficiently deaminated. Likely functions in a S-adenosyl-L-methionine (SAM) recycling pathway from S-adenosyl-L-homocysteine (SAH) produced from SAM-dependent methylation reactions. May also be involved in the recycling of 5'-deoxyadenosine, whereupon the 5'-deoxyribose moiety of 5'-deoxyinosine is further metabolized to deoxyhexoses used for the biosynthesis of aromatic amino acids in methanogens. This chain is 5'-deoxyadenosine deaminase, found in Methanococcus vannielii (strain ATCC 35089 / DSM 1224 / JCM 13029 / OCM 148 / SB).